The chain runs to 156 residues: Ribosomal RNA large subunit methyltransferase H (156 aa).

S-adenosyl-L-methionine is bound by residues Leu-73, Gly-104, and Ile-123–Leu-128.

Belongs to the RNA methyltransferase RlmH family. As to quaternary structure, homodimer.

It is found in the cytoplasm. The enzyme catalyses pseudouridine(1915) in 23S rRNA + S-adenosyl-L-methionine = N(3)-methylpseudouridine(1915) in 23S rRNA + S-adenosyl-L-homocysteine + H(+). Its function is as follows. Specifically methylates the pseudouridine at position 1915 (m3Psi1915) in 23S rRNA. The protein is Ribosomal RNA large subunit methyltransferase H of Burkholderia cenocepacia (strain ATCC BAA-245 / DSM 16553 / LMG 16656 / NCTC 13227 / J2315 / CF5610) (Burkholderia cepacia (strain J2315)).